The following is a 433-amino-acid chain: GTPase Der (433 aa).

EngA-type G domains lie at 3–167 and 175–347; these read NRVV…KEEK and IKVA…KDYT. GTP is bound by residues 9–16, 56–60, 119–122, 181–188, 228–232, and 293–296; these read GRPNVGKS, DTGGL, NKID, DTAGV, and NKMD. The KH-like domain maps to 348–432; sequence KQHKTSFVNR…PIKLVIKGRE (85 aa).

This sequence belongs to the TRAFAC class TrmE-Era-EngA-EngB-Septin-like GTPase superfamily. EngA (Der) GTPase family. As to quaternary structure, associates with the 50S ribosomal subunit.

Its function is as follows. GTPase that plays an essential role in the late steps of ribosome biogenesis. The sequence is that of GTPase Der from Aquifex aeolicus (strain VF5).